Consider the following 136-residue polypeptide: MLQPKRTKFRKVHKGRNRGLAIGTDVSFGTYGLKAVGRGRLTARQIEAARRAMTRAVKRQGKIWIRVFPDKPITEKPLEVRMGKGKGNVEYWVALIQPGKVLYEMDGVPEEVAREAFQLAAAKLPIKTTFVTKTVM.

It belongs to the universal ribosomal protein uL16 family. As to quaternary structure, part of the 50S ribosomal subunit.

Its function is as follows. Binds 23S rRNA and is also seen to make contacts with the A and possibly P site tRNAs. The polypeptide is Large ribosomal subunit protein uL16 (Proteus mirabilis (strain HI4320)).